Here is a 75-residue protein sequence, read N- to C-terminus: UPF0346 protein LEUM_0763 (75 aa).

Belongs to the UPF0346 family.

This Leuconostoc mesenteroides subsp. mesenteroides (strain ATCC 8293 / DSM 20343 / BCRC 11652 / CCM 1803 / JCM 6124 / NCDO 523 / NBRC 100496 / NCIMB 8023 / NCTC 12954 / NRRL B-1118 / 37Y) protein is UPF0346 protein LEUM_0763.